The primary structure comprises 214 residues: Octanoyltransferase (214 aa).

Positions 35–211 (KSNMNFIWLG…IIHEEFNFNF (177 aa)) constitute a BPL/LPL catalytic domain. Residues 75-82 (RGGEVTCH), 142-144 (SIG), and 155-157 (GFS) each bind substrate. Residue cysteine 173 is the Acyl-thioester intermediate of the active site.

This sequence belongs to the LipB family.

The protein resides in the cytoplasm. The enzyme catalyses octanoyl-[ACP] + L-lysyl-[protein] = N(6)-octanoyl-L-lysyl-[protein] + holo-[ACP] + H(+). It functions in the pathway protein modification; protein lipoylation via endogenous pathway; protein N(6)-(lipoyl)lysine from octanoyl-[acyl-carrier-protein]: step 1/2. In terms of biological role, catalyzes the transfer of endogenously produced octanoic acid from octanoyl-acyl-carrier-protein onto the lipoyl domains of lipoate-dependent enzymes. Lipoyl-ACP can also act as a substrate although octanoyl-ACP is likely to be the physiological substrate. The protein is Octanoyltransferase of Prochlorococcus marinus subsp. pastoris (strain CCMP1986 / NIES-2087 / MED4).